Here is a 324-residue protein sequence, read N- to C-terminus: Short chain dehydrogenase/reductase dmxR8 (324 aa).

Positions 33, 58, 83, and 110 each coordinate NADP(+). Ser-163 (proton donor) is an active-site residue. The NADP(+) site is built by Tyr-200 and Lys-204. Tyr-200 serves as the catalytic Proton acceptor. Lys-204 (lowers pKa of active site Tyr) is an active-site residue.

It belongs to the short-chain dehydrogenases/reductases (SDR) family.

It participates in secondary metabolite biosynthesis. Short chain dehydrogenase; part of the gene cluster that mediates the biosynthesis of the dimeric xanthones cryptosporioptides. The pathway begins with the synthesis of atrochrysone thioester by the polyketide synthase dmx-nrPKS. The atrochrysone carboxyl ACP thioesterase dmxR1 then breaks the thioester bond and releases the atrochrysone carboxylic acid from dmx-nrPKS. Atrochrysone carboxylic acid is decarboxylated by the decarboxylase dmxR15, and oxidized by the anthrone oxygenase dmxR16 to yield emodin. Emodin is then reduced to emodin hydroquinone by the oxidoreductase dmxR7. A-ring reduction by the short chain dehydrogenase dmxR18, dehydration by the scytalone dehydratase-like protein dmxR17 and probable spontaneous re-oxidation, results in overall deoxygenation to chrysophanol. Baeyer-Villiger oxidation by the Baeyer-Villiger monooxygenase (BVMO) dmxR6 then yields monodictylactone in equilibrium with monodictyphenone. In the case of the cryptosporioptides biosynthesis, monodictylactone is reduced at C-12 to an alcohol (by the short chain dehydrogenases dmxR12 or dmxR8) and hydroxylated at C-5 by dmxR9, yielding the electron-rich aromatic which could eliminate H(2)O to form the ortho-quinonemethide, followed by tautomerisation to paraquinone and complete the formal reduction to produce the 10-methylgroup. Conjugate addition of C-4a-OH to the resulting paraquinone by the monooxygenase dmxR10 then gives cyclohexadienone, which is then reduced at C-5 by the short chain dehydrogenase dmxR3 to give the dihydroxanthone. The 6,7-epoxide in the cryptosporioptides could be introduced by the cytochrome P450 monooxygenase dmxL3. The highly reducing PKS dmxL2 manufactures butyrate, which is further carboxylated by dmxL1 to form ethylmalonate. It is not yet clear whether the carboxylation occurs while the butyrate is attached to the ACP of dmxL2, but this unusual fungal metabolite could then be esterified to O-5 by the O-acetyltransferase dmxR13. Finally, dimerization performed by dmxR5 gives the observed dimers cryptosporioptides A, B and C as the final products of the pathway. In Cryptosporiopsis sp. (strain 8999), this protein is Short chain dehydrogenase/reductase dmxR8.